Here is a 105-residue protein sequence, read N- to C-terminus: MVPGEIFFGEGDVEINAGARRLEMEIVNTGDRPVQVGSHVHLPQANAALDFDRTAARGHRLDVPAGTAVRFEPGVAQRVRLVPLGGSREVHGLSLNPPGRLDGAS.

This sequence belongs to the urease beta subunit family. As to quaternary structure, heterotrimer of UreA (gamma), UreB (beta) and UreC (alpha) subunits. Three heterotrimers associate to form the active enzyme.

It localises to the cytoplasm. It carries out the reaction urea + 2 H2O + H(+) = hydrogencarbonate + 2 NH4(+). It participates in nitrogen metabolism; urea degradation; CO(2) and NH(3) from urea (urease route): step 1/1. This chain is Urease subunit beta, found in Mycobacterium sp. (strain JLS).